A 255-amino-acid polypeptide reads, in one-letter code: MKKKLGLLAMVVALMAITAGCSEVNQPITPKSTGIWNEYFVYPLSQLITYFANLFGSNYGLAIVVTTLIIRFALLPLMIKQTKSTKAMQALQPEMVKLKEKYSSKDQATQQKLQQEMMQLYQKNGVNPLAGCLPIFVQMPILFAFYHAIMRTSEISKHTFLWFDLGQADPYYILPVVAAITTFIQQKLAMAGTAGQNPQMAMMLWLMPIMILIFAINFPAALSLYWVVGNIFGIAQMYLIKGPEIKASKAGGSSK.

A signal peptide spans 1-20 (MKKKLGLLAMVVALMAITAG). A lipid anchor (N-palmitoyl cysteine) is attached at C21. A lipid anchor (S-diacylglycerol cysteine) is attached at C21. 5 helical membrane-spanning segments follow: residues 59–79 (YGLA…PLMI), 129–149 (LAGC…YHAI), 160–180 (FLWF…VAAI), 202–222 (MMLW…PAAL), and 223–243 (SLYW…IKGP).

Belongs to the OXA1/ALB3/YidC family. Type 2 subfamily.

The protein resides in the cell membrane. Required for the insertion and/or proper folding and/or complex formation of integral membrane proteins into the membrane. Involved in integration of membrane proteins that insert both dependently and independently of the Sec translocase complex, as well as at least some lipoproteins. This is Membrane protein insertase YidC 2 from Bacillus anthracis.